A 443-amino-acid polypeptide reads, in one-letter code: ATP-dependent protease ATPase subunit HslU (443 aa).

Residues Ile20, 62 to 67, Asp255, Glu321, and Arg393 contribute to the ATP site; that span reads GVGKTE.

It belongs to the ClpX chaperone family. HslU subfamily. A double ring-shaped homohexamer of HslV is capped on each side by a ring-shaped HslU homohexamer. The assembly of the HslU/HslV complex is dependent on binding of ATP.

The protein resides in the cytoplasm. ATPase subunit of a proteasome-like degradation complex; this subunit has chaperone activity. The binding of ATP and its subsequent hydrolysis by HslU are essential for unfolding of protein substrates subsequently hydrolyzed by HslV. HslU recognizes the N-terminal part of its protein substrates and unfolds these before they are guided to HslV for hydrolysis. The polypeptide is ATP-dependent protease ATPase subunit HslU (Helicobacter pylori (strain P12)).